The chain runs to 241 residues: Uridylate kinase (241 aa).

9–10 (GS) is a binding site for ATP. Residue G44 participates in UMP binding. Residues G45 and R49 each coordinate ATP. UMP contacts are provided by residues D66 and 114–120 (VVAGQTT). ATP contacts are provided by T140, F146, and D149.

The protein belongs to the UMP kinase family. In terms of assembly, homohexamer.

It is found in the cytoplasm. The catalysed reaction is UMP + ATP = UDP + ADP. It participates in pyrimidine metabolism; CTP biosynthesis via de novo pathway; UDP from UMP (UMPK route): step 1/1. Its activity is regulated as follows. Inhibited by UTP. Functionally, catalyzes the reversible phosphorylation of UMP to UDP. The chain is Uridylate kinase from Halobacterium salinarum (strain ATCC 29341 / DSM 671 / R1).